Consider the following 209-residue polypeptide: Outer-membrane lipoprotein carrier protein (209 aa).

An N-terminal signal peptide occupies residues 1-21 (MHRQLRYAVLATALFASTAFA).

Belongs to the LolA family. In terms of assembly, monomer.

It localises to the periplasm. Its function is as follows. Participates in the translocation of lipoproteins from the inner membrane to the outer membrane. Only forms a complex with a lipoprotein if the residue after the N-terminal Cys is not an aspartate (The Asp acts as a targeting signal to indicate that the lipoprotein should stay in the inner membrane). The protein is Outer-membrane lipoprotein carrier protein of Xanthomonas axonopodis pv. citri (strain 306).